Reading from the N-terminus, the 225-residue chain is Putative ATP-dependent Clp protease proteolytic subunit-like (225 aa).

This sequence belongs to the peptidase S14 family.

Its function is as follows. Has lost the two conserved residues (Ser and His) proposed to be part of the active site. Therefore it could be inactive. The chain is Putative ATP-dependent Clp protease proteolytic subunit-like (clpR) from Synechocystis sp. (strain ATCC 27184 / PCC 6803 / Kazusa).